A 348-amino-acid polypeptide reads, in one-letter code: Erythronate-4-phosphate dehydrogenase (348 aa).

Residues Thr46 and Thr67 each coordinate substrate. Residue Asp147 coordinates NAD(+). Arg209 is a catalytic residue. An NAD(+)-binding site is contributed by Asp233. Glu238 is an active-site residue. The active-site Proton donor is His255. Gly258 provides a ligand contact to NAD(+). Residue Tyr259 coordinates substrate.

Belongs to the D-isomer specific 2-hydroxyacid dehydrogenase family. PdxB subfamily. As to quaternary structure, homodimer.

It localises to the cytoplasm. It catalyses the reaction 4-phospho-D-erythronate + NAD(+) = (R)-3-hydroxy-2-oxo-4-phosphooxybutanoate + NADH + H(+). Its pathway is cofactor biosynthesis; pyridoxine 5'-phosphate biosynthesis; pyridoxine 5'-phosphate from D-erythrose 4-phosphate: step 2/5. Catalyzes the oxidation of erythronate-4-phosphate to 3-hydroxy-2-oxo-4-phosphonooxybutanoate. This chain is Erythronate-4-phosphate dehydrogenase, found in Bacteroides fragilis (strain YCH46).